The sequence spans 484 residues: Folate synthesis bifunctional protein (484 aa).

The interval 15 to 141 is HPPK; it reads VIALGSNVGN…PFVLAPLVDL (127 aa). The region spanning 202 to 470 is the Pterin-binding domain; the sequence is TYVMGILNLT…NVRDNVDAAR (269 aa). Residues 204 to 484 form a DHPS region; sequence VMGILNLTPD…MMTKRFKNVD (281 aa). N209 contributes to the Mg(2+) binding site. Residues T249, D286, N305, D378, K423, and 458–460 contribute to the (7,8-dihydropterin-6-yl)methyl diphosphate site; that span reads RVH.

In the N-terminal section; belongs to the HPPK family. It in the C-terminal section; belongs to the DHPS family. Requires Mg(2+) as cofactor. Expressed exclusively in reproductive tissues.

Its subcellular location is the cytoplasm. The protein localises to the cytosol. It carries out the reaction 6-hydroxymethyl-7,8-dihydropterin + ATP = (7,8-dihydropterin-6-yl)methyl diphosphate + AMP + H(+). It catalyses the reaction (7,8-dihydropterin-6-yl)methyl diphosphate + 4-aminobenzoate = 7,8-dihydropteroate + diphosphate. It functions in the pathway cofactor biosynthesis; tetrahydrofolate biosynthesis; 2-amino-4-hydroxy-6-hydroxymethyl-7,8-dihydropteridine diphosphate from 7,8-dihydroneopterin triphosphate: step 4/4. The protein operates within cofactor biosynthesis; tetrahydrofolate biosynthesis; 7,8-dihydrofolate from 2-amino-4-hydroxy-6-hydroxymethyl-7,8-dihydropteridine diphosphate and 4-aminobenzoate: step 1/2. Its activity is regulated as follows. Inhibited by sulfanilamide. In terms of biological role, catalyzes the first two consecutive steps of tetrahydrofolate biosynthesis. Plays a role in seed stress response and survival. This is Folate synthesis bifunctional protein from Arabidopsis thaliana (Mouse-ear cress).